A 267-amino-acid polypeptide reads, in one-letter code: Undecaprenyl-diphosphatase (267 aa).

A run of 8 helical transmembrane segments spans residues 5–25 (TIVA…PVSS), 45–65 (FEVL…AGRL), 82–102 (ILAV…AHRI), 108–128 (FETP…LLFV), 143–163 (FPLP…IPGV), 183–203 (AAEF…VYDL), 213–233 (AATG…VVVV), and 243–263 (YGYG…LLAL).

It belongs to the UppP family.

It is found in the cell inner membrane. It catalyses the reaction di-trans,octa-cis-undecaprenyl diphosphate + H2O = di-trans,octa-cis-undecaprenyl phosphate + phosphate + H(+). Catalyzes the dephosphorylation of undecaprenyl diphosphate (UPP). Confers resistance to bacitracin. The chain is Undecaprenyl-diphosphatase from Paracoccus denitrificans (strain Pd 1222).